The chain runs to 71 residues: MPIVKVRENEPFDVALRRFKRSCEKAGILSEVRRREHYEKPTTVRKRAKAAAQKRHAKKLARENARRVRLY.

The interval 39-71 is disordered; sequence EKPTTVRKRAKAAAQKRHAKKLARENARRVRLY. A compositionally biased stretch (basic residues) spans 43 to 59; the sequence is TVRKRAKAAAQKRHAKK. A compositionally biased stretch (basic and acidic residues) spans 60 to 71; it reads LARENARRVRLY.

It belongs to the bacterial ribosomal protein bS21 family.

In Vibrio atlanticus (strain LGP32) (Vibrio splendidus (strain Mel32)), this protein is Small ribosomal subunit protein bS21.